A 66-amino-acid polypeptide reads, in one-letter code: MPKMKTHRGSAKRFKKTGSGKLKRSHAYTSHLFANKSQKQKRKLRKSAVVSAGDFKRIKQQLANIK.

The segment covering 1–26 (MPKMKTHRGSAKRFKKTGSGKLKRSH) has biased composition (basic residues). A disordered region spans residues 1–48 (MPKMKTHRGSAKRFKKTGSGKLKRSHAYTSHLFANKSQKQKRKLRKSA).

It belongs to the bacterial ribosomal protein bL35 family.

The chain is Large ribosomal subunit protein bL35 from Bacillus licheniformis (strain ATCC 14580 / DSM 13 / JCM 2505 / CCUG 7422 / NBRC 12200 / NCIMB 9375 / NCTC 10341 / NRRL NRS-1264 / Gibson 46).